A 190-amino-acid polypeptide reads, in one-letter code: GTP cyclohydrolase 1 (190 aa).

Positions 75, 78, and 146 each coordinate Zn(2+).

This sequence belongs to the GTP cyclohydrolase I family. In terms of assembly, toroid-shaped homodecamer, composed of two pentamers of five dimers.

It carries out the reaction GTP + H2O = 7,8-dihydroneopterin 3'-triphosphate + formate + H(+). Its pathway is cofactor biosynthesis; 7,8-dihydroneopterin triphosphate biosynthesis; 7,8-dihydroneopterin triphosphate from GTP: step 1/1. This chain is GTP cyclohydrolase 1, found in Campylobacter jejuni subsp. doylei (strain ATCC BAA-1458 / RM4099 / 269.97).